The sequence spans 151 residues: uncharacterized protein (151 aa).

This sequence to B.subtilis pcf and to sigma factors.

This is an uncharacterized protein from Bacillus subtilis (strain 168).